We begin with the raw amino-acid sequence, 302 residues long: Tegument protein VP22 (302 aa).

A compositionally biased stretch (basic and acidic residues) spans 1 to 10 (MASSDGDRLC). Disordered stretches follow at residues 1-42 (MASS…PDDS) and 125-170 (SFTK…SSWC). The interval 154 to 244 (RPISFSTAPK…ANEADLGEGA (91 aa)) is interaction with gE. The segment covering 157–170 (SFSTAPKTATSSWC) has biased composition (polar residues). The Nuclear export signal motif lies at 212–224 (LDRLLTGAVIRIT). The disordered stretch occupies residues 243–302 (GASVSKRGHNRKTGDLQGGMGNEPMYAQVRKPKSRTDTQTTGRITNRSRARSASRTDTRK).

It belongs to the alphaherpesvirinae VP22 tegument protein family. Interacts with gE (via C-terminus); this interaction is necessary for the recruitment of VP22/ORF9 to the Golgi and its packaging into virions. Interacts with gM (via C-terminus). Interacts with VP16/ORF10; this interaction allows the formation of a tripartite complex composed of VP16/ORF10, VP22/ORF9 and VHS/ORF17. Interacts with the capsid-binding protein ORF44. Interacts with host CGAS. Post-translationally, highly phosphorylated in the host cell. Packaging is selective for underphosphorylated forms.

The protein resides in the virion tegument. The protein localises to the host cytoplasm. It localises to the host nucleus. Its subcellular location is the host Golgi apparatus. Functionally, tegument protein that plays different roles during the time course of infection. Participates in both the accumulation of viral mRNAs and viral protein translation at late time of infection. Modulates the RNase activity of the virion host shutoff protein ORF17 probably to ensure necessary levels of key cellular mRNAs and proteins. Plays a role in microtubule reorganization that occurs after viral infection by stabilizing microtubule network. Plays a role in the inhibition of host innate immune system by targeting the CGAS enzymatic activity which is the principal cytosolic DNA sensor that detects invading viral DNA. Acts by mediating disruption of liquid-like droplets in which CGAS is activated, thereby preventing CGAS activity. The polypeptide is Tegument protein VP22 (Homo sapiens (Human)).